Consider the following 65-residue polypeptide: Large ribosomal subunit protein bL35 (65 aa).

This sequence belongs to the bacterial ribosomal protein bL35 family.

The protein is Large ribosomal subunit protein bL35 of Photorhabdus laumondii subsp. laumondii (strain DSM 15139 / CIP 105565 / TT01) (Photorhabdus luminescens subsp. laumondii).